Here is a 360-residue protein sequence, read N- to C-terminus: Inhibin alpha chain (360 aa).

The first 17 residues, 1-17 (MWLQLLLLLLAPQGGHG), serve as a signal peptide directing secretion. Residues 18-60 (CHGLELDRELVLAKVRALFLDALGPPPVTGEGGDPGVRRLHRR) constitute a propeptide that is removed on maturation. The propeptide at 61–226 (HAVGGFMRRG…PPSGGERARR (166 aa)) is inhibin alpha N-terminal region. N-linked (GlcNAc...) asparagine glycosylation is found at asparagine 140 and asparagine 262. Intrachain disulfides connect cysteine 256–cysteine 322, cysteine 285–cysteine 357, and cysteine 289–cysteine 359.

It belongs to the TGF-beta family. Dimeric, linked by one or more disulfide bonds. Activin B is a dimer of alpha and beta-B. Inhibin A is a dimer of alpha and beta-A. Inhibin B is a dimer of alpha and beta-B. Interacts with TGFBR3L; this interaction regulates female fertility. Proteolytic processing yields a number of bioactive forms, consisting either solely of the mature alpha chain, of the most N-terminal propeptide linked through a disulfide bond to the mature alpha chain, or of the entire proprotein.

It localises to the secreted. In terms of biological role, inhibins and activins inhibit and activate, respectively, the secretion of follitropin by the pituitary gland. Inhibins/activins are involved in regulating a number of diverse functions such as hypothalamic and pituitary hormone secretion, gonadal hormone secretion, germ cell development and maturation, erythroid differentiation, insulin secretion, nerve cell survival, embryonic axial development or bone growth, depending on their subunit composition. Inhibins appear to oppose the functions of activins. Inhibin A is a dimer of alpha/INHA and beta-A/INHBA that functions as a feedback regulator in the hypothalamic-pituitary-gonadal (HPG) axis. Inhibits the secretion of FSH from the anterior pituitary gland by acting on pituitary gonadotrope cells. Antagonizes activin A by binding to the proteoglycan, betaglycan, and forming a stable complex with and, thereby, sequestering type II activin receptors while excluding type I receptor. Its function is as follows. Inhibin B is a dimer of alpha and beta-B that plays a crucial role in the regulation of the reproductive system by inhibiting the secretion of follicle-stimulating hormone (FSH) from the anterior pituitary gland. Thereby, maintains reproductive homeostasis in both males and females. Acts as a more potent suppressor of FSH release than inhibin A. Functions as competitive receptor antagonist binding activin type II receptors with high affinity in the presence of the TGF-beta type III coreceptor/TGFBR3L. The protein is Inhibin alpha chain (INHA) of Bos taurus (Bovine).